A 537-amino-acid chain; its full sequence is Chaperonin GroEL (537 aa).

Residues 29-32 (TLGP), 86-90 (DGTTT), Gly413, and Asp492 contribute to the ATP site.

Belongs to the chaperonin (HSP60) family. In terms of assembly, forms a cylinder of 14 subunits composed of two heptameric rings stacked back-to-back. Interacts with the co-chaperonin GroES.

Its subcellular location is the cytoplasm. It carries out the reaction ATP + H2O + a folded polypeptide = ADP + phosphate + an unfolded polypeptide.. In terms of biological role, together with its co-chaperonin GroES, plays an essential role in assisting protein folding. The GroEL-GroES system forms a nano-cage that allows encapsulation of the non-native substrate proteins and provides a physical environment optimized to promote and accelerate protein folding. This is Chaperonin GroEL from Dehalococcoides mccartyi (strain CBDB1).